We begin with the raw amino-acid sequence, 680 residues long: Protein FAR1-RELATED SEQUENCE 11 (680 aa).

The tract at residues 1–36 is disordered; that stretch reads MSDDPGQMLLIYDDPSDQRSLSLDDASSTEESPDDN. Residues 62–156 enclose the FAR1 domain; that stretch reads EFYSTFAKRC…ANHHNHELLE (95 aa). Residues 277–373 enclose the MULE domain; it reads AVVFDTTHRL…CIWMVVGKFP (97 aa). Residues 556–589 form an SWIM-type zinc finger; it reads YWVPQEGIISCSCQLFEFSGFLCRHALRVLSTGN.

This sequence belongs to the FHY3/FAR1 family. As to expression, expressed in hypocotyls, rosette and cauline leaves, inflorescences stems, flowers and siliques.

The protein localises to the nucleus. In terms of biological role, putative transcription activator involved in regulating light control of development. In Arabidopsis thaliana (Mouse-ear cress), this protein is Protein FAR1-RELATED SEQUENCE 11 (FRS11).